A 210-amino-acid chain; its full sequence is DNA-directed RNA polymerases I, II, and III subunit RPABC1 (210 aa).

The residue at position 1 (Met1) is an N-acetylmethionine. Lys81 is covalently cross-linked (Glycyl lysine isopeptide (Lys-Gly) (interchain with G-Cter in SUMO2)).

Belongs to the archaeal Rpo5/eukaryotic RPB5 RNA polymerase subunit family. Component of the RNA polymerase I (Pol I), RNA polymerase II (Pol II) and RNA polymerase III (Pol III) complexes consisting of at least 13, 12 and 17 subunits, respectively. Pol I complex consists of a ten-subunit catalytic core composed of POLR1A/RPA1, POLR1B/RPA2, POLR1C/RPAC1, POLR1D/RPAC2, POLR1H/RPA12, POLR2E/RPABC1, POLR2F/RPABC2, POLR2H/RPABC3, POLR2K/RPABC4 and POLR2L/RPABC5; a mobile stalk subunit POLR1F/RPA43 protruding from the core and additional subunits homologous to general transcription factors POLR1E/RPA49 and POLR1G/RPA34. Part of Pol I pre-initiation complex (PIC), in which Pol I core assembles with RRN3 and promoter-bound UTBF and SL1/TIF-IB complex. Pol II complex contains a ten-subunit catalytic core composed of POLR2A/RPB1, POLR2B/RPB2, POLR2C/RPB3, POLR2I/RPB9, POLR2J/RPB11, POLR2E/RPABC1, POLR2F/RPABC2, POLR2H/RPABC3, POLR2K/RPABC4 and POLR2L/RPABC5 and a mobile stalk composed of two subunits POLR2D/RPB4 and POLR2G/RPB7. Part of Pol II(G) complex, in which Pol II core associates with an additional subunit POLR2M; unlike conventional Pol II, Pol II(G) functions as a transcriptional repressor. Part of TBP-based Pol II pre-initiation complex (PIC), in which Pol II core assembles with general transcription factors and other specific initiation factors including GTF2E1, GTF2E2, GTF2F1, GTF2F2, TCEA1, ERCC2, ERCC3, GTF2H2, GTF2H3, GTF2H4, GTF2H5, GTF2A1, GTF2A2, GTF2B and TBP; this large multi-subunit PIC complex mediates DNA unwinding and targets Pol II core to the transcription start site where the first phosphodiester bond forms. In Pol II complex, this subunit is present in 2-fold molar excess over the other subunits. Pol III complex consists of a ten-subunit catalytic core composed of POLR3A/RPC1, POLR3B/RPC2, POLR1C/RPAC1, POLR1D/RPAC2, POLR3K/RPC10, POLR2E/RPABC1, POLR2F/RPABC2, POLR2H/RPABC3, POLR2K/RPABC4 and POLR2L/RPABC5; a mobile stalk composed of two subunits POLR3H/RPC8 and CRCP/RPC9, protruding from the core and functioning primarily in transcription initiation; and additional subunits homologous to general transcription factors of the RNA polymerase II machinery, POLR3C/RPC3-POLR3F/RPC6-POLR3G/RPC7 heterotrimer required for transcription initiation and POLR3D/RPC4-POLR3E/RPC5 heterodimer involved in both transcription initiation and termination. Component of the PAQosome complex which is responsible for the biogenesis of several protein complexes and which consists of R2TP complex members RUVBL1, RUVBL2, RPAP3 and PIH1D1, URI complex members PFDN2, PFDN6, PDRG1, UXT and URI1 as well as ASDURF, POLR2E and DNAAF10/WDR92. Interacts with URI1.

The protein localises to the nucleus. It is found in the nucleolus. Functionally, DNA-dependent RNA polymerase catalyzes the transcription of DNA into RNA using the four ribonucleoside triphosphates as substrates. Common component of RNA polymerases I, II and III which synthesize ribosomal RNA precursors, mRNA precursors and many functional non-coding RNAs, and small RNAs, such as 5S rRNA and tRNAs, respectively. Pol II is the central component of the basal RNA polymerase II transcription machinery. Pols are composed of mobile elements that move relative to each other. In Pol II, POLR2E/RPABC1 is part of the lower jaw surrounding the central large cleft and thought to grab the incoming DNA template. Seems to be the major component in this process. The chain is DNA-directed RNA polymerases I, II, and III subunit RPABC1 (POLR2E) from Pongo abelii (Sumatran orangutan).